A 64-amino-acid polypeptide reads, in one-letter code: Cytochrome b-c1 complex subunit 9 (64 aa).

At 2 to 21 (VAPTLTARLYSLLFRRTSTF) the chain is on the mitochondrial matrix side. Residues 22–47 (ALTIVVGALFFERAFDQGADAIYEHI) form a helical membrane-spanning segment. The Mitochondrial intermembrane portion of the chain corresponds to 48–64 (NEGKLWKHIKHKYENKE).

This sequence belongs to the UQCR10/QCR9 family. As to quaternary structure, component of the ubiquinol-cytochrome c oxidoreductase (cytochrome b-c1 complex, complex III, CIII), a multisubunit enzyme composed of 11 subunits. The complex is composed of 3 respiratory subunits cytochrome b, cytochrome c1 and Rieske protein UQCRFS1, 2 core protein subunits UQCRC1/QCR1 and UQCRC2/QCR2, and 6 low-molecular weight protein subunits UQCRH/QCR6, UQCRB/QCR7, UQCRQ/QCR8, UQCR10/QCR9, UQCR11/QCR10 and subunit 9, the cleavage product of Rieske protein UQCRFS1. The complex exists as an obligatory dimer and forms supercomplexes (SCs) in the inner mitochondrial membrane with NADH-ubiquinone oxidoreductase (complex I, CI) and cytochrome c oxidase (complex IV, CIV), resulting in different assemblies (supercomplex SCI(1)III(2)IV(1) and megacomplex MCI(2)III(2)IV(2)). Interacts with STMP1.

It localises to the mitochondrion inner membrane. Functionally, component of the ubiquinol-cytochrome c oxidoreductase, a multisubunit transmembrane complex that is part of the mitochondrial electron transport chain which drives oxidative phosphorylation. The respiratory chain contains 3 multisubunit complexes succinate dehydrogenase (complex II, CII), ubiquinol-cytochrome c oxidoreductase (cytochrome b-c1 complex, complex III, CIII) and cytochrome c oxidase (complex IV, CIV), that cooperate to transfer electrons derived from NADH and succinate to molecular oxygen, creating an electrochemical gradient over the inner membrane that drives transmembrane transport and the ATP synthase. The cytochrome b-c1 complex catalyzes electron transfer from ubiquinol to cytochrome c, linking this redox reaction to translocation of protons across the mitochondrial inner membrane, with protons being carried across the membrane as hydrogens on the quinol. In the process called Q cycle, 2 protons are consumed from the matrix, 4 protons are released into the intermembrane space and 2 electrons are passed to cytochrome c. This is Cytochrome b-c1 complex subunit 9 (UQCR10) from Bos taurus (Bovine).